A 409-amino-acid chain; its full sequence is 2,3-bisphosphoglycerate-independent phosphoglycerate mutase (409 aa).

The segment at 160 to 179 (ITDADPKHEGNKPKTVKPLD) is disordered.

Belongs to the BPG-independent phosphoglycerate mutase family. A-PGAM subfamily.

It carries out the reaction (2R)-2-phosphoglycerate = (2R)-3-phosphoglycerate. The protein operates within carbohydrate degradation; glycolysis; pyruvate from D-glyceraldehyde 3-phosphate: step 3/5. Catalyzes the interconversion of 2-phosphoglycerate and 3-phosphoglycerate. In Methanosphaera stadtmanae (strain ATCC 43021 / DSM 3091 / JCM 11832 / MCB-3), this protein is 2,3-bisphosphoglycerate-independent phosphoglycerate mutase.